We begin with the raw amino-acid sequence, 378 residues long: MATDYYAVLGVRRDASQDEIKKAFRRLARELHPDVNPDPKTQERFKEINAAYEVLSDPQKKQVYDLGGDPLSQSGGGGAGGFGAGGFGNFSDIMDAFFGTASQRGPRSRTRRGQDAMIRVEIELDEAAFGTTKDIQVETAVVCTTCSGEGAAPGTSAQTCDMCRGRGEVSQVTRSFLGQVMTSRPCPQCQGFGTVVPTPCPECAGDGRVRSRRTLTVKIPAGVDNGTRIQLAGEGEVGPGGGPAGDLYVEIHELPHQTFQRRGDDLHCTVTIPMTAAALGTKVPLETLDGMEEVDIRPGTQSGQSIPLHGRGITHLRGGGRGDLIVHVEVTTPTKMDPEQERLLRELAKLRGEERPTGQFQPGQQGLFSRLKDAFNGR.

The region spanning 4 to 68 (DYYAVLGVRR…QKKQVYDLGG (65 aa)) is the J domain. Residues 130 to 212 (GTTKDIQVET…CAGDGRVRSR (83 aa)) form a CR-type zinc finger. Residues C143, C146, C160, C163, C186, C189, C200, and C203 each contribute to the Zn(2+) site. CXXCXGXG motif repeat units lie at residues 143–150 (CTTCSGEG), 160–167 (CDMCRGRG), 186–193 (CPQCQGFG), and 200–207 (CPECAGDG). The segment at 351–378 (RGEERPTGQFQPGQQGLFSRLKDAFNGR) is disordered. Over residues 358 to 367 (GQFQPGQQGL) the composition is skewed to polar residues.

The protein belongs to the DnaJ family. As to quaternary structure, homodimer. Requires Zn(2+) as cofactor.

The protein localises to the cytoplasm. Functionally, participates actively in the response to hyperosmotic and heat shock by preventing the aggregation of stress-denatured proteins and by disaggregating proteins, also in an autonomous, DnaK-independent fashion. Unfolded proteins bind initially to DnaJ; upon interaction with the DnaJ-bound protein, DnaK hydrolyzes its bound ATP, resulting in the formation of a stable complex. GrpE releases ADP from DnaK; ATP binding to DnaK triggers the release of the substrate protein, thus completing the reaction cycle. Several rounds of ATP-dependent interactions between DnaJ, DnaK and GrpE are required for fully efficient folding. Also involved, together with DnaK and GrpE, in the DNA replication of plasmids through activation of initiation proteins. The sequence is that of Chaperone protein DnaJ 2 from Streptomyces avermitilis (strain ATCC 31267 / DSM 46492 / JCM 5070 / NBRC 14893 / NCIMB 12804 / NRRL 8165 / MA-4680).